A 327-amino-acid chain; its full sequence is Complex I intermediate-associated protein 30, mitochondrial (327 aa).

Residues 1–24 (MALVHKLLRDTYILRKFSKPTSAL) constitute a mitochondrion transit peptide. The tract at residues 42-63 (PVASPGKASSQRKTEGDLQGDH) is disordered. Residues 53 to 63 (RKTEGDLQGDH) show a composition bias toward basic and acidic residues. A Phosphoserine modification is found at Ser-318.

Belongs to the CIA30 family. Part of the mitochondrial complex I assembly/MCIA complex that comprises at least the core subunits TMEM126B, NDUFAF1, ECSIT and ACAD9 and complement subunits such as COA1 and TMEM186. Interacts with ECSIT. Interacts with ACAD9. At early stages of complex I assembly, it is found in intermediate subcomplexes that contain different subunits including NDUFB6, NDUFA6, NDUFA9, NDUFS3, NDUFS7, ND1, ND2 and ND3. Interacts with TMEM70 and TMEM242.

Its subcellular location is the mitochondrion. It is found in the mitochondrion matrix. In terms of biological role, as part of the MCIA complex, involved in the assembly of the mitochondrial complex I. This Gorilla gorilla gorilla (Western lowland gorilla) protein is Complex I intermediate-associated protein 30, mitochondrial.